Here is a 155-residue protein sequence, read N- to C-terminus: Regulatory protein RecX (155 aa).

This sequence belongs to the RecX family.

The protein resides in the cytoplasm. Functionally, modulates RecA activity. In Pseudomonas syringae pv. tomato (strain ATCC BAA-871 / DC3000), this protein is Regulatory protein RecX.